The following is an 83-amino-acid chain: Exodeoxyribonuclease 7 small subunit (83 aa).

It belongs to the XseB family. Heterooligomer composed of large and small subunits.

It localises to the cytoplasm. The catalysed reaction is Exonucleolytic cleavage in either 5'- to 3'- or 3'- to 5'-direction to yield nucleoside 5'-phosphates.. Functionally, bidirectionally degrades single-stranded DNA into large acid-insoluble oligonucleotides, which are then degraded further into small acid-soluble oligonucleotides. This Rhodopseudomonas palustris (strain HaA2) protein is Exodeoxyribonuclease 7 small subunit.